Reading from the N-terminus, the 295-residue chain is NADPH-dependent reductive aminase (295 aa).

An N-terminal signal peptide occupies residues 1–18; that stretch reads MSKHIGIFGLGAMGTALA. 6-20 is a binding site for NADP(+); the sequence is GIFGLGAMGTALAAK.

It belongs to the HIBADH-related family. As to quaternary structure, homodimer. The cofactor is NADPH.

Its function is as follows. NADPH-dependent reductive aminase that catalyzes the reductive coupling of a broad set of carbonyl compounds with a variety of primary and secondary amines. Possesses remarkably high activity for the reductive amination of ketones and amines, often with high stereoselectivity and in some cases with ketone:amine ratios as low as 1:1. The cofactor NADPH, the carbonyl compound and the amine are added to the enzyme in that sequence, followed by the release of product, NADP(+) being released at last. RedAm is also able to act in the reverse, oxidative direction and exhibits activity in the dehydrogenation of amines to yield imines. The highest activity is found for 1-methyl-tetrahydroquinoline and acyclic amines are also found to be transformed. This Aspergillus oryzae (strain ATCC 42149 / RIB 40) (Yellow koji mold) protein is NADPH-dependent reductive aminase.